We begin with the raw amino-acid sequence, 491 residues long: MSDDDQELGITESKSHNTGEWYAEVVQKAGLADYGPEGMSGFIVTRPRAYAVWERLQGFLDAKFKDTGVQNAYFPLFIPESYLEREKDIVEGFDPEVAWVTEAGNKELEERLAVRPTSESIITPYISQWVRSHRDLPLRVNQWCSVVRWEATETKPFFRTKEFLWQEGHTAHATHEGAWEETMTRLDQYASVYEDLLAMPVLKGQKPDHDKFPGAETTTTVEALMPDGKSVQAGTSHHLGQSFAEAFDITFSDEDEEERIAHTTSWGLSWRALGALIMTHSDEQGLVLPPGVAPEQVVVVPIWQEDTKDEVLEYAEGVADDLDDAGIRVELDDRDGRNPGFKFNEHELNGVPLRIEIGPHEVEDGELTLVHRPDGESVVEDREGVVATVQDHFDEVYAKLYATAEETLDGAVREADDRADILGTLGQHGGYVTAPWCGDEACEEPIKEPMAAEIVMVPFEDDDPLAEADHGETCAICDDDAERTAYFAKSY.

The protein belongs to the class-II aminoacyl-tRNA synthetase family. ProS type 3 subfamily. Homodimer.

Its subcellular location is the cytoplasm. It catalyses the reaction tRNA(Pro) + L-proline + ATP = L-prolyl-tRNA(Pro) + AMP + diphosphate. In terms of biological role, catalyzes the attachment of proline to tRNA(Pro) in a two-step reaction: proline is first activated by ATP to form Pro-AMP and then transferred to the acceptor end of tRNA(Pro). The polypeptide is Proline--tRNA ligase (Halorubrum lacusprofundi (strain ATCC 49239 / DSM 5036 / JCM 8891 / ACAM 34)).